The following is a 413-amino-acid chain: Arginine biosynthesis bifunctional protein ArgJ (413 aa).

Positions 158, 184, 195, 285, 408, and 413 each coordinate substrate. Residue Thr195 is the Nucleophile of the active site.

Belongs to the ArgJ family. Heterotetramer of two alpha and two beta chains.

The protein resides in the cytoplasm. The catalysed reaction is N(2)-acetyl-L-ornithine + L-glutamate = N-acetyl-L-glutamate + L-ornithine. The enzyme catalyses L-glutamate + acetyl-CoA = N-acetyl-L-glutamate + CoA + H(+). It functions in the pathway amino-acid biosynthesis; L-arginine biosynthesis; L-ornithine and N-acetyl-L-glutamate from L-glutamate and N(2)-acetyl-L-ornithine (cyclic): step 1/1. It participates in amino-acid biosynthesis; L-arginine biosynthesis; N(2)-acetyl-L-ornithine from L-glutamate: step 1/4. In terms of biological role, catalyzes two activities which are involved in the cyclic version of arginine biosynthesis: the synthesis of N-acetylglutamate from glutamate and acetyl-CoA as the acetyl donor, and of ornithine by transacetylation between N(2)-acetylornithine and glutamate. The chain is Arginine biosynthesis bifunctional protein ArgJ from Rhizobium meliloti (strain 1021) (Ensifer meliloti).